Here is a 304-residue protein sequence, read N- to C-terminus: KIN17-like protein (304 aa).

The C2H2-type zinc-finger motif lies at 26 to 50 (WYCSACQKQMRDENGFKCHTQSEGH). Disordered regions lie at residues 204–228 (IDLS…SAQN) and 261–291 (LNKS…DIIA).

It belongs to the KIN17 family.

The protein localises to the nucleus. Its subcellular location is the nucleolus. This is KIN17-like protein from Schizosaccharomyces pombe (strain 972 / ATCC 24843) (Fission yeast).